The sequence spans 263 residues: Small ribosomal subunit protein uS2 (263 aa).

Ser2 carries the N-acetylserine modification. Over residues 213 to 223 (NAAEEARAGAT) the composition is skewed to low complexity. A disordered region spans residues 213–245 (NAAEEARAGATEETEEVVAEAETEWNTETNVED). A compositionally biased stretch (acidic residues) spans 224–245 (EETEEVVAEAETEWNTETNVED).

Belongs to the universal ribosomal protein uS2 family. In terms of assembly, component of the small ribosomal subunit. Mature ribosomes consist of a small (40S) and a large (60S) subunit. The 40S subunit contains about 33 different proteins and 1 molecule of RNA (18S). The 60S subunit contains about 49 different proteins and 3 molecules of RNA (25S, 5.8S and 5S). Interacts with RPS21.

It localises to the cytoplasm. Its function is as follows. Required for the assembly and/or stability of the 40S ribosomal subunit. Required for the processing of the 20S rRNA-precursor to mature 18S rRNA in a late step of the maturation of 40S ribosomal subunits. In Clavispora lusitaniae (strain ATCC 42720) (Yeast), this protein is Small ribosomal subunit protein uS2.